The primary structure comprises 635 residues: 1-deoxy-D-xylulose-5-phosphate synthase (635 aa).

Thiamine diphosphate-binding positions include His-79 and 120–122 (GHS). Asp-151 is a binding site for Mg(2+). Thiamine diphosphate-binding positions include 152–153 (GA), Asn-182, Tyr-290, and Glu-372. Asn-182 serves as a coordination point for Mg(2+).

Belongs to the transketolase family. DXPS subfamily. As to quaternary structure, homodimer. Mg(2+) is required as a cofactor. Requires thiamine diphosphate as cofactor.

It carries out the reaction D-glyceraldehyde 3-phosphate + pyruvate + H(+) = 1-deoxy-D-xylulose 5-phosphate + CO2. Its pathway is metabolic intermediate biosynthesis; 1-deoxy-D-xylulose 5-phosphate biosynthesis; 1-deoxy-D-xylulose 5-phosphate from D-glyceraldehyde 3-phosphate and pyruvate: step 1/1. Functionally, catalyzes the acyloin condensation reaction between C atoms 2 and 3 of pyruvate and glyceraldehyde 3-phosphate to yield 1-deoxy-D-xylulose-5-phosphate (DXP). The sequence is that of 1-deoxy-D-xylulose-5-phosphate synthase from Stenotrophomonas maltophilia (strain K279a).